Here is a 96-residue protein sequence, read N- to C-terminus: Large ribosomal subunit protein eL21 (96 aa).

Residues 1 to 22 (MRKSKGFKSRSRYKLKRSIRPK) form a disordered region.

Belongs to the eukaryotic ribosomal protein eL21 family.

The polypeptide is Large ribosomal subunit protein eL21 (Methanosphaera stadtmanae (strain ATCC 43021 / DSM 3091 / JCM 11832 / MCB-3)).